The primary structure comprises 809 residues: Trimethylamine-N-oxide reductase 2 (809 aa).

The tat-type signal signal peptide spans 1–31 (MTLTRREFIKHSGIAAGTLVVTSAAPLPAWA). Position 176 (serine 176) interacts with Mo-bis(molybdopterin guanine dinucleotide).

It belongs to the prokaryotic molybdopterin-containing oxidoreductase family. Mo-bis(molybdopterin guanine dinucleotide) serves as cofactor. In terms of processing, predicted to be exported by the Tat system. The position of the signal peptide cleavage has not been experimentally proven.

Its subcellular location is the periplasm. The enzyme catalyses trimethylamine + 2 Fe(III)-[cytochrome c] + H2O = trimethylamine N-oxide + 2 Fe(II)-[cytochrome c] + 3 H(+). Reduces trimethylamine-N-oxide (TMAO) into trimethylamine; an anaerobic reaction coupled to energy-yielding reactions. Can also reduce other N- and S-oxide compounds such as 4-methylmorpholine-N-oxide and biotin sulfoxide (BSO), but with a lower catalytic efficiency. This is Trimethylamine-N-oxide reductase 2 (torZ) from Escherichia coli O6:H1 (strain CFT073 / ATCC 700928 / UPEC).